The sequence spans 682 residues: UvrABC system protein B (682 aa).

The Helicase ATP-binding domain maps to 27 to 414 (DNIRAGVAHQ…SEGIVVEQII (388 aa)). 40–47 (GVTGSGKT) provides a ligand contact to ATP. Positions 93–116 (YYDYYQPEAYVPTSDTYIEKDSSI) match the Beta-hairpin motif. The Helicase C-terminal domain occupies 432–594 (QMEDLMTECR…IEPVSVRKSL (163 aa)). Positions 609–628 (AAKGRGKGRGRQAAPAQTAA) are disordered. The UVR domain maps to 642-677 (GGLIQRLEREMRESARDLEFEKAAELRDRIRMLRER).

The protein belongs to the UvrB family. Forms a heterotetramer with UvrA during the search for lesions. Interacts with UvrC in an incision complex.

It is found in the cytoplasm. Functionally, the UvrABC repair system catalyzes the recognition and processing of DNA lesions. A damage recognition complex composed of 2 UvrA and 2 UvrB subunits scans DNA for abnormalities. Upon binding of the UvrA(2)B(2) complex to a putative damaged site, the DNA wraps around one UvrB monomer. DNA wrap is dependent on ATP binding by UvrB and probably causes local melting of the DNA helix, facilitating insertion of UvrB beta-hairpin between the DNA strands. Then UvrB probes one DNA strand for the presence of a lesion. If a lesion is found the UvrA subunits dissociate and the UvrB-DNA preincision complex is formed. This complex is subsequently bound by UvrC and the second UvrB is released. If no lesion is found, the DNA wraps around the other UvrB subunit that will check the other stand for damage. The sequence is that of UvrABC system protein B from Oleidesulfovibrio alaskensis (strain ATCC BAA-1058 / DSM 17464 / G20) (Desulfovibrio alaskensis).